Here is a 549-residue protein sequence, read N- to C-terminus: Phosphoenolpyruvate carboxykinase (ATP) (549 aa).

250–257 lines the ATP pocket; it reads GLSGTGKT.

Belongs to the phosphoenolpyruvate carboxykinase (ATP) family. As to quaternary structure, homotetramer.

The enzyme catalyses oxaloacetate + ATP = phosphoenolpyruvate + ADP + CO2. It participates in carbohydrate biosynthesis; gluconeogenesis. This is Phosphoenolpyruvate carboxykinase (ATP) (PCK1) from Saccharomyces cerevisiae (strain ATCC 204508 / S288c) (Baker's yeast).